The sequence spans 199 residues: Cytosine-containing mismatch-binding protein 1 (199 aa).

Residues 123-197 (PKKPSSAFIL…QYDKFMKEAG (75 aa)) constitute a DNA-binding region (HMG box).

In terms of assembly, monomer.

The protein localises to the nucleus. Its function is as follows. Binds to cytosines in base mismatches and opposite chemically altered guanines. May be involved in repair of DNA damage. The chain is Cytosine-containing mismatch-binding protein 1 from Schizosaccharomyces pombe (strain 972 / ATCC 24843) (Fission yeast).